Consider the following 325-residue polypeptide: Holliday junction branch migration complex subunit RuvB (325 aa).

The tract at residues 1-180 (MKNQLLDAKV…FGIHLKLNFY (180 aa)) is large ATPase domain (RuvB-L). ATP contacts are provided by residues leucine 19, arginine 20, glycine 61, lysine 64, threonine 65, threonine 66, 127-129 (EDF), arginine 170, tyrosine 180, and arginine 217. Threonine 65 serves as a coordination point for Mg(2+). The interval 181-251 (SCEELTKIVE…ITDYALNQLG (71 aa)) is small ATPAse domain (RuvB-S). The head domain (RuvB-H) stretch occupies residues 254–325 (KLGLDSSDHK…ITANALKHLH (72 aa)). DNA contacts are provided by arginine 290, arginine 309, and arginine 314.

The protein belongs to the RuvB family. As to quaternary structure, homohexamer. Forms an RuvA(8)-RuvB(12)-Holliday junction (HJ) complex. HJ DNA is sandwiched between 2 RuvA tetramers; dsDNA enters through RuvA and exits via RuvB. An RuvB hexamer assembles on each DNA strand where it exits the tetramer. Each RuvB hexamer is contacted by two RuvA subunits (via domain III) on 2 adjacent RuvB subunits; this complex drives branch migration. In the full resolvosome a probable DNA-RuvA(4)-RuvB(12)-RuvC(2) complex forms which resolves the HJ.

The protein resides in the cytoplasm. The catalysed reaction is ATP + H2O = ADP + phosphate + H(+). The RuvA-RuvB-RuvC complex processes Holliday junction (HJ) DNA during genetic recombination and DNA repair, while the RuvA-RuvB complex plays an important role in the rescue of blocked DNA replication forks via replication fork reversal (RFR). RuvA specifically binds to HJ cruciform DNA, conferring on it an open structure. The RuvB hexamer acts as an ATP-dependent pump, pulling dsDNA into and through the RuvAB complex. RuvB forms 2 homohexamers on either side of HJ DNA bound by 1 or 2 RuvA tetramers; 4 subunits per hexamer contact DNA at a time. Coordinated motions by a converter formed by DNA-disengaged RuvB subunits stimulates ATP hydrolysis and nucleotide exchange. Immobilization of the converter enables RuvB to convert the ATP-contained energy into a lever motion, pulling 2 nucleotides of DNA out of the RuvA tetramer per ATP hydrolyzed, thus driving DNA branch migration. The RuvB motors rotate together with the DNA substrate, which together with the progressing nucleotide cycle form the mechanistic basis for DNA recombination by continuous HJ branch migration. Branch migration allows RuvC to scan DNA until it finds its consensus sequence, where it cleaves and resolves cruciform DNA. This is Holliday junction branch migration complex subunit RuvB from Orientia tsutsugamushi (strain Ikeda) (Rickettsia tsutsugamushi).